Consider the following 258-residue polypeptide: Glutathione S-transferase DHAR3, chloroplastic (258 aa).

Residues 1–42 constitute a chloroplast transit peptide; it reads MISLRFQPSTTAGVLSASVSRAGFIKRCGSTKPGRVGRFVTM. Cys52 is modified (S-glutathionyl cysteine). Residues Lys54 and Asp65 each contribute to the glutathione site. L-ascorbate contacts are provided by Lys54 and Asp65. The region spanning 56–129 is the GST N-terminal domain; sequence SITTPNKLGD…DVITQALEEK (74 aa). Cys66 functions as the Nucleophile in the catalytic mechanism. Cys66 and Cys69 are joined by a disulfide. The Glutathione-binding motif lies at 66–71; that stretch reads CPFCQK. Glutathione-binding residues include Lys93, Val106, Ser119, His205, and Trp252. One can recognise a GST C-terminal domain in the interval 130–258; sequence YPEPPLATPP…IAGWRPKVMG (129 aa). Lys255 contacts L-ascorbate.

The protein belongs to the GST superfamily. DHAR family. In terms of assembly, monomer. Interacts with TRX3. Partial S-glutathionylation and intramolecular disulfide bond formation between Cys-66 and Cys-69 in the presence of oxidized glutathione (GSSG). Could be reduced by TRX-dependent process.

It localises to the plastid. The protein localises to the chloroplast stroma. It carries out the reaction RX + glutathione = an S-substituted glutathione + a halide anion + H(+). It catalyses the reaction L-dehydroascorbate + 2 glutathione = glutathione disulfide + L-ascorbate. Functionally, displays a dual function. As a soluble protein, exhibits glutathione-dependent thiol transferase and dehydroascorbate (DHA) reductase activities. Key component of the ascorbate recycling system. Involved in the redox homeostasis, especially in scavenging of ROS under oxidative stresses. The protein is Glutathione S-transferase DHAR3, chloroplastic (DHAR3) of Arabidopsis thaliana (Mouse-ear cress).